The sequence spans 127 residues: MSDTNKYRIEVQPMPQFIPEQSDPENDRYIFAYTITIKNIGEVPAQLVSRHWIITDGNNEVQEVRGLGVVGKQPLLQPGESFQYTSGSSLTTAIGTMKGTYQMVAEDGTHFEAEIPEFVLASPRALH.

Positions 3 to 127 (DTNKYRIEVQ…FVLASPRALH (125 aa)) constitute an ApaG domain.

This Dechloromonas aromatica (strain RCB) protein is Protein ApaG.